The following is a 380-amino-acid chain: Beta sliding clamp (380 aa).

Belongs to the beta sliding clamp family. As to quaternary structure, forms a ring-shaped head-to-tail homodimer around DNA which binds and tethers DNA polymerases and other proteins to the DNA. The DNA replisome complex has a single clamp-loading complex (3 tau and 1 each of delta, delta', psi and chi subunits) which binds 3 Pol III cores (1 core on the leading strand and 2 on the lagging strand) each with a beta sliding clamp dimer. Additional proteins in the replisome are other copies of gamma, psi and chi, Ssb, DNA helicase and RNA primase.

It is found in the cytoplasm. Its function is as follows. Confers DNA tethering and processivity to DNA polymerases and other proteins. Acts as a clamp, forming a ring around DNA (a reaction catalyzed by the clamp-loading complex) which diffuses in an ATP-independent manner freely and bidirectionally along dsDNA. Initially characterized for its ability to contact the catalytic subunit of DNA polymerase III (Pol III), a complex, multichain enzyme responsible for most of the replicative synthesis in bacteria; Pol III exhibits 3'-5' exonuclease proofreading activity. The beta chain is required for initiation of replication as well as for processivity of DNA replication. The chain is Beta sliding clamp (dnaN) from Lactococcus lactis subsp. lactis (strain IL1403) (Streptococcus lactis).